The chain runs to 115 residues: Replication initiation control protein YabA (115 aa).

Zn(2+) contacts are provided by histidine 90, cysteine 92, cysteine 106, and cysteine 109.

The protein belongs to the YabA family. Homotetramer. Interacts with both DnaA and DnaN, acting as a bridge between these two proteins. It depends on Zn(2+) as a cofactor.

The protein localises to the cytoplasm. It is found in the nucleoid. In terms of biological role, involved in control of chromosome replication initiation. Inhibits the cooperative binding of DnaA to the oriC region, thus negatively regulating initiation of chromosome replication. Inhibits the ability of DnaA-ATP to form a helix on DNA; does not disassemble preformed DnaA-DNA helices. Decreases the residence time of DnaA on the chromosome at its binding sites (oriC, replication forks and promoter-binding sites). Tethers DnaA to the replication machinery via the DNA polymerase beta sliding clamp subunit (dnaN). Associates with oriC and other DnaA targets on the chromosome in a DnaA-dependent manner. This Staphylococcus aureus (strain bovine RF122 / ET3-1) protein is Replication initiation control protein YabA.